Consider the following 119-residue polypeptide: Ribonuclease P protein component (119 aa).

Belongs to the RnpA family. In terms of assembly, consists of a catalytic RNA component (M1 or rnpB) and a protein subunit.

The enzyme catalyses Endonucleolytic cleavage of RNA, removing 5'-extranucleotides from tRNA precursor.. Functionally, RNaseP catalyzes the removal of the 5'-leader sequence from pre-tRNA to produce the mature 5'-terminus. It can also cleave other RNA substrates such as 4.5S RNA. The protein component plays an auxiliary but essential role in vivo by binding to the 5'-leader sequence and broadening the substrate specificity of the ribozyme. The protein is Ribonuclease P protein component of Aeromonas salmonicida (strain A449).